The sequence spans 138 residues: Diuretic hormone 1 (138 aa).

The first 19 residues, 1–19, serve as a signal peptide directing secretion; that stretch reads MMWWAIWCVMVVVSSAASA. The propeptide occupies 20–78; sequence APAPDSAPMDLVQIDSAGPDDESLGYAVSSLEGRYGAEAPWLYLLAEMPRDSQIGRAAV. An Isoleucine amide modification is found at Ile-121. The propeptide occupies 125–138; it reads GLQWSRSEQPSAYY.

Belongs to the sauvagine/corticotropin-releasing factor/urotensin I family.

The protein localises to the secreted. Regulation of fluid secretion. This Manduca sexta (Tobacco hawkmoth) protein is Diuretic hormone 1.